We begin with the raw amino-acid sequence, 295 residues long: uncharacterized protein (295 aa).

Residues 8–106 (QKTINWIESH…HMPPGAYRTF (99 aa)) enclose the HTH araC/xylS-type domain. The segment at residues 25-46 (EDIVNVSSFSKFHFHRIFQKEV) is a DNA-binding region (H-T-H motif).

Functionally, probable transcriptional regulator. This is an uncharacterized protein from Bacillus subtilis (strain 168).